The sequence spans 321 residues: Ferredoxin--NADP reductase (321 aa).

Residues Glu33, Gln41, Tyr46, Val86, Leu119, Asp277, and Ser318 each coordinate FAD.

Belongs to the ferredoxin--NADP reductase type 2 family. Homodimer. It depends on FAD as a cofactor.

The catalysed reaction is 2 reduced [2Fe-2S]-[ferredoxin] + NADP(+) + H(+) = 2 oxidized [2Fe-2S]-[ferredoxin] + NADPH. The sequence is that of Ferredoxin--NADP reductase from Lactococcus lactis subsp. cremoris (strain MG1363).